The following is a 465-amino-acid chain: Chromosomal replication initiator protein DnaA (465 aa).

The segment at 1 to 85 is domain I, interacts with DnaA modulators; it reads MSGFWESCLQ…IALVIGSGKA (85 aa). The domain II stretch occupies residues 85 to 129; the sequence is ATAARIQATTTDSGQNAPANPATTSEKRTAASEKARGKGSNYEKS. Over residues 93–108 the composition is skewed to polar residues; the sequence is TTTDSGQNAPANPATT. The interval 93–125 is disordered; that stretch reads TTTDSGQNAPANPATTSEKRTAASEKARGKGSN. The span at 109–125 shows a compositional bias: basic and acidic residues; sequence SEKRTAASEKARGKGSN. Positions 130–346 are domain III, AAA+ region; that stretch reads RLFPSFTFDN…GALKKVLAYS (217 aa). Residues G174, G176, K177, and T178 each contribute to the ATP site. The interval 347-465 is domain IV, binds dsDNA; it reads SFHGRVIALD…LHVLLQVLKG (119 aa).

This sequence belongs to the DnaA family. In terms of assembly, oligomerizes as a right-handed, spiral filament on DNA at oriC.

The protein resides in the cytoplasm. Its function is as follows. Plays an essential role in the initiation and regulation of chromosomal replication. ATP-DnaA binds to the origin of replication (oriC) to initiate formation of the DNA replication initiation complex once per cell cycle. Binds the DnaA box (a 9 base pair repeat at the origin) and separates the double-stranded (ds)DNA. Forms a right-handed helical filament on oriC DNA; dsDNA binds to the exterior of the filament while single-stranded (ss)DNA is stabiized in the filament's interior. The ATP-DnaA-oriC complex binds and stabilizes one strand of the AT-rich DNA unwinding element (DUE), permitting loading of DNA polymerase. After initiation quickly degrades to an ADP-DnaA complex that is not apt for DNA replication. Binds acidic phospholipids. The polypeptide is Chromosomal replication initiator protein DnaA (Dechloromonas aromatica (strain RCB)).